A 148-amino-acid polypeptide reads, in one-letter code: Cathelicidin-1 (148 aa).

Positions 1–17 (MLSCWVLLLALLGGACA) are cleaved as a signal peptide. Residues 18–122 (LPAPLGYSQA…TCVDSMADPV (105 aa)) constitute a propeptide that is removed on maturation. 2 disulfides stabilise this stretch: C75-C86 and C97-C114.

The protein belongs to the cathelicidin family. Detected in gizzard, liver, small intestine, large intestine, cloaca, bursa of Fabricius, gall bladder, lung, trachea, kidney, testis and bone marrow.

The protein localises to the secreted. Its function is as follows. Binds bacterial lipopolysaccharide (LPS). Has potent antimicrobial activity against Gram-positive and Gram-negative bacteria (in vitro). Has hemolytic activity (in vitro). May play a role in the innate immune response. This is Cathelicidin-1 (CATHL1) from Gallus gallus (Chicken).